A 375-amino-acid chain; its full sequence is D-apiose dehydrogenase (375 aa).

Residue 29–30 (FF) participates in NAD(+) binding. 4 residues coordinate Mg(2+): W38, R39, I41, and A44. NAD(+) is bound by residues D51, S93, 111–112 (QK), N140, and 179–181 (QPY). Residue K112 participates in substrate binding. The substrate site is built by Q179, D192, H196, and Y246.

It belongs to the Gfo/Idh/MocA family.

The enzyme catalyses D-apiofuranose + NAD(+) = D-apionolactone + NADH + H(+). It participates in carbohydrate metabolism. Its function is as follows. Involved in catabolism of D-apiose. Catalyzes oxidation of D-apiose to D-apionolactone. In Paraburkholderia graminis (strain ATCC 700544 / DSM 17151 / LMG 18924 / NCIMB 13744 / C4D1M), this protein is D-apiose dehydrogenase.